A 405-amino-acid polypeptide reads, in one-letter code: Glyceraldehyde-3-phosphate dehydrogenase A, chloroplastic (405 aa).

The N-terminal 68 residues, 1 to 68 (MASATFSVAK…GHKKSLVVEA (68 aa)), are a transit peptide targeting the chloroplast. NADP(+)-binding positions include 80–81 (RI), aspartate 104, and arginine 149. D-glyceraldehyde 3-phosphate-binding positions include 221-223 (SCT), threonine 252, arginine 267, 280-281 (TG), and arginine 303. Cysteine 222 (nucleophile) is an active-site residue. Position 385 (asparagine 385) interacts with NADP(+).

The protein belongs to the glyceraldehyde-3-phosphate dehydrogenase family. Tetramer of either four A chains (GAPDH 2) or two A and two B chains (GAPDH 1).

The protein localises to the plastid. The protein resides in the chloroplast. The enzyme catalyses D-glyceraldehyde 3-phosphate + phosphate + NADP(+) = (2R)-3-phospho-glyceroyl phosphate + NADPH + H(+). The protein operates within carbohydrate biosynthesis; Calvin cycle. In Pisum sativum (Garden pea), this protein is Glyceraldehyde-3-phosphate dehydrogenase A, chloroplastic (GAPA).